Reading from the N-terminus, the 381-residue chain is Alkanesulfonate monooxygenase (381 aa).

The protein belongs to the SsuD family. As to quaternary structure, homotetramer.

The enzyme catalyses an alkanesulfonate + FMNH2 + O2 = an aldehyde + FMN + sulfite + H2O + 2 H(+). Its function is as follows. Catalyzes the desulfonation of aliphatic sulfonates. In Enterobacter sp. (strain 638), this protein is Alkanesulfonate monooxygenase.